The sequence spans 333 residues: Phosphoenolpyruvate transferase (333 aa).

Aspartate 65 is a binding site for 7,8-didemethyl-8-hydroxy-5-deazariboflavin.

It belongs to the CofD family. Homodimer. Requires Mg(2+) as cofactor.

The catalysed reaction is enolpyruvoyl-2-diphospho-5'-guanosine + 7,8-didemethyl-8-hydroxy-5-deazariboflavin = dehydro coenzyme F420-0 + GMP + H(+). It participates in cofactor biosynthesis; coenzyme F420 biosynthesis. Functionally, catalyzes the transfer of the phosphoenolpyruvate moiety from enoylpyruvoyl-2-diphospho-5'-guanosine (EPPG) to 7,8-didemethyl-8-hydroxy-5-deazariboflavin (FO) with the formation of dehydro coenzyme F420-0 and GMP. The sequence is that of Phosphoenolpyruvate transferase from Mycobacterium leprae (strain TN).